Consider the following 769-residue polypeptide: Sensor protein DivL (769 aa).

The chain crosses the membrane as a helical span at residues 6-26 (LILAAAAGAVCLAISVALWSH). Residues 547-758 (NVSYELRTPL…TFTCHLPETQ (212 aa)) form the Histidine kinase domain. Tyr550 carries the post-translational modification Phosphotyrosine; by autocatalysis.

Post-translationally, autophosphorylated.

The protein localises to the cell membrane. It carries out the reaction ATP + protein L-histidine = ADP + protein N-phospho-L-histidine.. Functionally, required for cell division and growth. It catalyzes the phosphorylation of CtrA and activates transcription in vitro of the cell cycle-regulated fliF promoter. This chain is Sensor protein DivL (divL), found in Caulobacter vibrioides (strain ATCC 19089 / CIP 103742 / CB 15) (Caulobacter crescentus).